The chain runs to 742 residues: 5-methyltetrahydropteroyltriglutamate--homocysteine methyltransferase (742 aa).

Residues 18–21 (REWK) and lysine 112 each bind 5-methyltetrahydropteroyltri-L-glutamate. Residues 420–422 (IGS) and glutamate 473 contribute to the L-homocysteine site. L-methionine is bound by residues 420–422 (IGS) and glutamate 473. Residue tryptophan 550 participates in 5-methyltetrahydropteroyltri-L-glutamate binding. Aspartate 588 lines the L-homocysteine pocket. Residue aspartate 588 participates in L-methionine binding. Glutamate 594 is a 5-methyltetrahydropteroyltri-L-glutamate binding site. Positions 630, 632, and 654 each coordinate Zn(2+). Histidine 683 functions as the Proton donor in the catalytic mechanism. Cysteine 715 lines the Zn(2+) pocket.

The protein belongs to the vitamin-B12 independent methionine synthase family. Requires Zn(2+) as cofactor.

The enzyme catalyses 5-methyltetrahydropteroyltri-L-glutamate + L-homocysteine = tetrahydropteroyltri-L-glutamate + L-methionine. It functions in the pathway amino-acid biosynthesis; L-methionine biosynthesis via de novo pathway; L-methionine from L-homocysteine (MetE route): step 1/1. Its function is as follows. Catalyzes the transfer of a methyl group from 5-methyltetrahydrofolate to homocysteine resulting in methionine formation. In Staphylococcus aureus (strain JH9), this protein is 5-methyltetrahydropteroyltriglutamate--homocysteine methyltransferase.